The primary structure comprises 157 residues: MSQVILDLQLACENHAGLPDEAQFQRWLDGVIPQFQEEAEVTIRLVDEAESHDLNLTYRGKDKPTNVLSFPFEAPPGIEMPLLGDLIICRQVVEQEAQEQSKPLEAHWAHMVVHGSLHLLGYDHIDDDEAEEMESLETEIMLAMGYEDPYIAEKITE.

Residues histidine 114, histidine 118, and histidine 124 each contribute to the Zn(2+) site.

Belongs to the endoribonuclease YbeY family. Zn(2+) is required as a cofactor.

It localises to the cytoplasm. Functionally, single strand-specific metallo-endoribonuclease involved in late-stage 70S ribosome quality control and in maturation of the 3' terminus of the 16S rRNA. The polypeptide is Endoribonuclease YbeY (Salmonella paratyphi A (strain AKU_12601)).